Consider the following 416-residue polypeptide: Glutamyl-tRNA reductase (416 aa).

Residues Thr-49–Arg-52, Ser-105, Glu-110–Gln-112, and Gln-116 contribute to the substrate site. Catalysis depends on Cys-50, which acts as the Nucleophile. Gly-185–Ile-190 contacts NADP(+).

It belongs to the glutamyl-tRNA reductase family. In terms of assembly, homodimer.

The catalysed reaction is (S)-4-amino-5-oxopentanoate + tRNA(Glu) + NADP(+) = L-glutamyl-tRNA(Glu) + NADPH + H(+). The protein operates within porphyrin-containing compound metabolism; protoporphyrin-IX biosynthesis; 5-aminolevulinate from L-glutamyl-tRNA(Glu): step 1/2. Its function is as follows. Catalyzes the NADPH-dependent reduction of glutamyl-tRNA(Glu) to glutamate 1-semialdehyde (GSA). The protein is Glutamyl-tRNA reductase of Shewanella frigidimarina (strain NCIMB 400).